The primary structure comprises 541 residues: Putative transferase YhbX (541 aa).

Residues 1-60 (MTVFNKFARSFKSHWLLYLSVIVFGITNLVASSGAHMVQRLLFFVLTILVVKRISSLPLR) are Periplasmic-facing. The chain crosses the membrane as a helical span at residues 61-81 (LLVAAPFVLLTAADMSISLYS). Residues 82–110 (WCTFGTTFNDGFAISVLQSDPDEVAKMLG) lie on the Cytoplasmic side of the membrane. The chain crosses the membrane as a helical span at residues 111 to 131 (MYSPYLCAFAFLSLLFLAVII). Residues 132–141 (KYDVSLPTKK) lie on the Periplasmic side of the membrane. The helical transmembrane segment at 142–162 (VTGILLLIVISGSLFSACQFA) threads the bilayer. The Cytoplasmic segment spans residues 163 to 264 (YKDAKNKNAF…RKQIKLFNQA (102 aa)). Residues 265-285 (ISGAPYTALSVPLSLTADSVL) traverse the membrane as a helical segment. Residues 286–541 (SHDIHNYPDN…QGNPTPEGQG (256 aa)) are Periplasmic-facing.

It belongs to the phosphoethanolamine transferase family.

The protein resides in the cell inner membrane. In terms of biological role, there are several lipid A forms in this strain, including a phosphoethanolamine (1-O-P-pEtN) form; overexpression of this gene does not lead to higher levels of the 1-O-P-pEtN form of lipid A. This is Putative transferase YhbX (yhbX) from Escherichia coli O157:H7.